Reading from the N-terminus, the 120-residue chain is Small ribosomal subunit protein bS16 (120 aa).

Basic and acidic residues predominate over residues 84–110 (KREVKSNPEKAKPGKRAQERAAEKAQK). Residues 84 to 120 (KREVKSNPEKAKPGKRAQERAAEKAQKAADAAAATAE) are disordered. The span at 111–120 (AADAAAATAE) shows a compositional bias: low complexity.

It belongs to the bacterial ribosomal protein bS16 family.

The sequence is that of Small ribosomal subunit protein bS16 from Rhizobium rhizogenes (strain K84 / ATCC BAA-868) (Agrobacterium radiobacter).